The sequence spans 71 residues: Beta-defensin 7 (71 aa).

The signal sequence occupies residues 1–22 (MRIHYVLFAFLLVLLSPFAAFS). Residue Gln-23 is modified to Pyrrolidone carboxylic acid. Residues 23–25 (QDI) constitute a propeptide that is removed on maturation. 3 disulfides stabilise this stretch: Cys-31–Cys-58, Cys-38–Cys-52, and Cys-42–Cys-59.

Belongs to the beta-defensin family. LAP/TAP subfamily.

Its subcellular location is the secreted. In terms of biological role, has bactericidal activity. The protein is Beta-defensin 7 (Defb7) of Mus musculus (Mouse).